Consider the following 187-residue polypeptide: Elongation factor P (187 aa).

Residue Lys33 is modified to N6-(3,6-diaminohexanoyl)-5-hydroxylysine.

This sequence belongs to the elongation factor P family. In terms of processing, may be beta-lysylated on the epsilon-amino group of Lys-33 by the combined action of EpmA and EpmB, and then hydroxylated on the C5 position of the same residue by EpmC (if this protein is present). Lysylation is critical for the stimulatory effect of EF-P on peptide-bond formation. The lysylation moiety may extend toward the peptidyltransferase center and stabilize the terminal 3-CCA end of the tRNA. Hydroxylation of the C5 position on Lys-33 may allow additional potential stabilizing hydrogen-bond interactions with the P-tRNA.

The protein resides in the cytoplasm. The protein operates within protein biosynthesis; polypeptide chain elongation. Involved in peptide bond synthesis. Alleviates ribosome stalling that occurs when 3 or more consecutive Pro residues or the sequence PPG is present in a protein, possibly by augmenting the peptidyl transferase activity of the ribosome. Modification of Lys-33 is required for alleviation. The sequence is that of Elongation factor P from Blochmanniella floridana.